Reading from the N-terminus, the 96-residue chain is Large ribosomal subunit protein uL23 (96 aa).

The protein belongs to the universal ribosomal protein uL23 family. In terms of assembly, part of the 50S ribosomal subunit. Contacts protein L29, and trigger factor when it is bound to the ribosome.

In terms of biological role, one of the early assembly proteins it binds 23S rRNA. One of the proteins that surrounds the polypeptide exit tunnel on the outside of the ribosome. Forms the main docking site for trigger factor binding to the ribosome. The sequence is that of Large ribosomal subunit protein uL23 from Thermus thermophilus (strain ATCC BAA-163 / DSM 7039 / HB27).